A 519-amino-acid chain; its full sequence is MRNSAMQQLNPSEISALIKQRIGDLDTSATAKNEGTIVMVSDGIVRIHGLADAMYGEMIEFDGGLFGMALNLEQDSVGAVVLGNYLSLQEGQKARCTGRVLEVPVGPELLGRVVDALGNPIDGKGPIDAKLTDAVEKVAPGVIWRQSVDEPVQTGYKSVDTMIPVGRGQRELIIGDRQTGKTAMAIDAIIAQKHSGIKCVYVAIGQKQSTIANVVRKLEETGAMAYTTVVAAAAADPAAMQYLAPYSGCTMGEYFRDRGEDALIIYDDLSKQAVAYRQISLLLRRPPGREAYPGDVFYLHSRLLERASRVSADYVEKFTNGAVTGQTGSLTALPIIETQAGDVSAFVPTNVISITDGQIFLETSLFNAGIRPAVNAGISVSRVGGSAQTKIIKKLSGGIRTALAQYRELAAFAQFASDLDEATRKQLEHGQRVTELMKQKQYAPYSIADQAVSVYASNEGYMADVEVKKIVDFDAALISYFRSEYAPLMKQIDETGDYNKDIEAAIKSGIESFKATQTY.

175 to 182 (GDRQTGKT) contributes to the ATP binding site.

This sequence belongs to the ATPase alpha/beta chains family. F-type ATPases have 2 components, CF(1) - the catalytic core - and CF(0) - the membrane proton channel. CF(1) has five subunits: alpha(3), beta(3), gamma(1), delta(1), epsilon(1). CF(0) has three main subunits: a(1), b(2) and c(9-12). The alpha and beta chains form an alternating ring which encloses part of the gamma chain. CF(1) is attached to CF(0) by a central stalk formed by the gamma and epsilon chains, while a peripheral stalk is formed by the delta and b chains.

The protein localises to the cell inner membrane. The catalysed reaction is ATP + H2O + 4 H(+)(in) = ADP + phosphate + 5 H(+)(out). Functionally, produces ATP from ADP in the presence of a proton gradient across the membrane. The alpha chain is a regulatory subunit. This chain is ATP synthase subunit alpha, found in Acinetobacter baylyi (strain ATCC 33305 / BD413 / ADP1).